A 289-amino-acid polypeptide reads, in one-letter code: Dermonecrotic toxin LarSicTox-betaID1 (289 aa).

The signal sequence occupies residues 1–2 (EG). A propeptide spanning residues 3-11 (AEQDGSERT) is cleaved from the precursor. Residue histidine 22 is part of the active site. 2 residues coordinate Mg(2+): glutamate 42 and aspartate 44. Histidine 58 serves as the catalytic Nucleophile. 2 disulfides stabilise this stretch: cysteine 62/cysteine 68 and cysteine 64/cysteine 207. Aspartate 102 is a binding site for Mg(2+).

The protein belongs to the arthropod phospholipase D family. Class II subfamily. The cofactor is Mg(2+). As to expression, expressed by the venom gland.

It localises to the secreted. The enzyme catalyses an N-(acyl)-sphingosylphosphocholine = an N-(acyl)-sphingosyl-1,3-cyclic phosphate + choline. It carries out the reaction N-hexanoyl-sphing-4-enine-1-phosphocholine = N-(hexanoyl)-sphing-4-enine-1,3-cyclic phosphate + choline. It catalyses the reaction N-(dodecanoyl)-sphing-4-enine-1-phosphocholine = N-dodecanoyl-sphing-4-enine-1,3-cyclic phosphate + choline. The catalysed reaction is an N-(acyl)-sphingosylphosphoethanolamine = an N-(acyl)-sphingosyl-1,3-cyclic phosphate + ethanolamine. The enzyme catalyses N-dodecanoyl-heptadecasphing-4-enine-1-phosphoethanolamine = N-dodecanoyl-heptadecasphing-4-enine-1,3-cyclic phosphate + ethanolamine. It carries out the reaction a 1-acyl-sn-glycero-3-phosphocholine = a 1-acyl-sn-glycero-2,3-cyclic phosphate + choline. It catalyses the reaction 1-tetradecanoyl-sn-glycero-3-phosphocholine = 1-tetradecanoyl-sn-glycero-2,3-cyclic phosphate + choline. The catalysed reaction is 1-octanoyl-sn-glycero-3-phosphocholine = 1-octanoyl-sn-glycero-2,3-cyclic phosphate + choline. The enzyme catalyses a 1-acyl-sn-glycero-3-phosphoethanolamine = a 1-acyl-sn-glycero-2,3-cyclic phosphate + ethanolamine. It carries out the reaction 1-tetradecanoyl-sn-glycero-3-phosphoethanolamine = 1-tetradecanoyl-sn-glycero-2,3-cyclic phosphate + ethanolamine. In terms of biological role, dermonecrotic toxins cleave the phosphodiester linkage between the phosphate and headgroup of certain phospholipids (sphingolipid and lysolipid substrates), forming an alcohol (often choline) and a cyclic phosphate. This toxin acts on sphingomyelin (SM) and on ceramide phosphoethanolamine (CPE) with high activity. It also acts on lysophosphatidylcholine (LPC) and on lysophosphatidylethanolamine (LPE) with moderate activity. It is not active on lysophosphatidylserine (LPS), and lysophosphatidylglycerol (LPG). It acts by transphosphatidylation, releasing exclusively cyclic phosphate as second products. It is not surprising that spider toxins have affinity for ethanolamine-containing sphingolipids since they are common in insect prey. On mammals, induces dermonecrosis, hemolysis, increased vascular permeability, edema, inflammatory response, and platelet aggregation. This is Dermonecrotic toxin LarSicTox-betaID1 from Loxosceles arizonica (Arizona brown spider).